Reading from the N-terminus, the 224-residue chain is Urease accessory protein UreF (224 aa).

Belongs to the UreF family. As to quaternary structure, ureD, UreF and UreG form a complex that acts as a GTP-hydrolysis-dependent molecular chaperone, activating the urease apoprotein by helping to assemble the nickel containing metallocenter of UreC. The UreE protein probably delivers the nickel.

The protein localises to the cytoplasm. In terms of biological role, required for maturation of urease via the functional incorporation of the urease nickel metallocenter. This chain is Urease accessory protein UreF, found in Nitrosococcus oceani (strain ATCC 19707 / BCRC 17464 / JCM 30415 / NCIMB 11848 / C-107).